We begin with the raw amino-acid sequence, 95 residues long: Integration host factor subunit beta (95 aa).

Belongs to the bacterial histone-like protein family. Heterodimer of an alpha and a beta chain.

This protein is one of the two subunits of integration host factor, a specific DNA-binding protein that functions in genetic recombination as well as in transcriptional and translational control. This is Integration host factor subunit beta from Shewanella loihica (strain ATCC BAA-1088 / PV-4).